The primary structure comprises 95 residues: FXYD domain-containing ion transport regulator 6 (95 aa).

A signal peptide spans 1 to 18; it reads MEVVLLFLCGLLAPAVLA. The Extracellular portion of the chain corresponds to 19-35; sequence SATEQEKEKDPFHYDYQ. A helical transmembrane segment spans residues 36 to 58; sequence TLRIGGLVFAVVLFSVGILLILS. Over 59–95 the chain is Cytoplasmic; it reads RRCKCSFNQKPRAPGDEEAQVENLVTANATEPQKAEN. Positions 69–95 are disordered; that stretch reads PRAPGDEEAQVENLVTANATEPQKAEN.

The protein belongs to the FXYD family. As to quaternary structure, regulatory subunit of the sodium/potassium-transporting ATPase which is composed of a catalytic alpha subunit, a non-catalytic beta subunit and an additional regulatory subunit. The regulatory subunit, a member of the FXYD protein family, modulates the enzymatic activity in a tissue- and isoform-specific way by changing affinities of the Na+/K+-ATPase toward Na(+), K(+) or ATP.

The protein localises to the cell membrane. Functionally, associates with and regulates the activity of the sodium/potassium-transporting ATPase (NKA) which catalyzes the hydrolysis of ATP coupled with the exchange of Na(+) and K(+) ions across the plasma membrane. Reduces the apparent affinity for intracellular Na(+) with no change in the apparent affinity for extracellular K(+). In addition to modulating NKA kinetics, may also function as a regulator of NKA localization to the plasma membrane. The chain is FXYD domain-containing ion transport regulator 6 (FXYD6) from Bos taurus (Bovine).